The chain runs to 307 residues: Homoserine O-acetyltransferase (307 aa).

The Acyl-thioester intermediate role is filled by C142. Residues K163 and S192 each contribute to the substrate site. H235 acts as the Proton acceptor in catalysis. The active site involves E237. R249 is a binding site for substrate.

This sequence belongs to the MetA family.

Its subcellular location is the cytoplasm. It carries out the reaction L-homoserine + acetyl-CoA = O-acetyl-L-homoserine + CoA. It participates in amino-acid biosynthesis; L-methionine biosynthesis via de novo pathway; O-acetyl-L-homoserine from L-homoserine: step 1/1. Functionally, transfers an acetyl group from acetyl-CoA to L-homoserine, forming acetyl-L-homoserine. The polypeptide is Homoserine O-acetyltransferase (Rhizobium johnstonii (strain DSM 114642 / LMG 32736 / 3841) (Rhizobium leguminosarum bv. viciae)).